The following is a 222-amino-acid chain: Uracil-DNA glycosylase (222 aa).

Catalysis depends on aspartate 61, which acts as the Proton acceptor.

The protein belongs to the uracil-DNA glycosylase (UDG) superfamily. UNG family.

Its subcellular location is the cytoplasm. The enzyme catalyses Hydrolyzes single-stranded DNA or mismatched double-stranded DNA and polynucleotides, releasing free uracil.. Its function is as follows. Excises uracil residues from the DNA which can arise as a result of misincorporation of dUMP residues by DNA polymerase or due to deamination of cytosine. This chain is Uracil-DNA glycosylase, found in Aeromonas salmonicida (strain A449).